The sequence spans 657 residues: MLSSTFVRSKAGLVPVILAALILAACTGDAPQTPPPVNIQDEASANSDYYLQQLQQSSDDNKADWQLLAIRALLREAKVPQAAEQLSTLPANLSDTQRQEQQLLAAELLIAQKNTPAAADILAKLEATQLSANQKVRYYQAQIAANQDKATLPLIRAFIAQEPLLTDKAHQDNIDGTWQSLSQLTPQELNTMVINADENVLQGWLDLLRVYQDNKQDPELLKAGIKDWQTRYPQNPAAKNLPTALTQISNFSQASTAKIALLLPLSGPAQVFADAIQQGFTAAQNGSAVTASVPVTPNVTESSPTDTAAVVSDDTPATLPAPVTPPVVTNAQVKIYDTNTQPLAALLAQAQQDGATLVVGPLLKPEVEQLSATPSTLNILALNQPEASNNSPNICYFALSPEDEARDAAHHLWEQQKRMPLLLVPRGALGERIAKAFADEWQKQGGQTVLQQNFGSTTELKQSINSGAGIRLTGTPVSVSNVAAAPASVTIAGLTIPAPPIDAPVVSTSSSGNIDAVYIIATPSELTLIKPMIDMATSSRSKPALFASSRSYQAGAGPDYRLEMEGIQFSDIPLMAGSNPALLQQASAKYANDYSLVRLYAMGIDAWALANHFSEMRQIPGFQVKGVTGDLTASSDCVITRKLPWLQYRQGMVVPLA.

The N-terminal stretch at 1-25 (MLSSTFVRSKAGLVPVILAALILAA) is a signal peptide. C26 carries N-palmitoyl cysteine lipidation. A lipid anchor (S-diacylglycerol cysteine) is attached at C26.

The protein belongs to the LpoA family. Interacts with PBP1a.

It localises to the cell outer membrane. In terms of biological role, regulator of peptidoglycan synthesis that is essential for the function of penicillin-binding protein 1A (PBP1a). This chain is Penicillin-binding protein activator LpoA, found in Yersinia pseudotuberculosis serotype O:1b (strain IP 31758).